An 840-amino-acid polypeptide reads, in one-letter code: Phosphatidylglycerol lysyltransferase (840 aa).

Topologically, residues 1 to 8 (MTEELKNR) are cytoplasmic. Residues 9 to 29 (LLSILKFVFAAVLFIAVVATL) form a helical membrane-spanning segment. Residues 30 to 52 (YHELAHINFKQTLEAFSKINRWY) are Extracellular-facing. A helical membrane pass occupies residues 53-73 (LVGLFICGGSAMILLSLYDLI). Residues 74 to 89 (LVKGLKLDIPLIRVFK) are Cytoplasmic-facing. Residues 90 to 110 (ISYIINALNAIVGFGGFIGAG) form a helical membrane-spanning segment. Residues 111 to 129 (FRAFIYKNYTTDRKKLVHA) are Extracellular-facing. The chain crosses the membrane as a helical span at residues 130-150 (ISIILISMLMGLSLLSILVVL). Topologically, residues 151–167 (HIFDASHIINKVSWVRW) are cytoplasmic. The chain crosses the membrane as a helical span at residues 168-188 (ILYVVALFLPLFIAYTMINPI). At 189–193 (DRNNK) the chain is on the extracellular side. Residues 194-216 (YLGVYCTLVSSFEWLAAATVLYL) form a helical membrane-spanning segment. Topologically, residues 217–229 (STVIVDINIAFTT) are cytoplasmic. A helical membrane pass occupies residues 230–250 (VIGIFIIAALSGLVSFIPGGF). Residues 251–271 (GAFDLVVLLGLKSLGVPEEKV) are Extracellular-facing. Residues 272–292 (LLALLLYRFAYYFVPVIIALI) form a helical membrane-spanning segment. Residues 293–335 (LSTFEFGSSARKYFEESKYFVPARDVTSFLFSYQKDIIAKIPS) lie on the Cytoplasmic side of the membrane. Residues 336–356 (FALATLVLITSFVFFINNITI) form a helical membrane-spanning segment. The Extracellular segment spans residues 357–366 (VYDGLYDDHH). The helical transmembrane segment at 367–387 (FAYYIMLSVHTSACLLLLINV) threads the bilayer. Residues 388-394 (RGVFKQS) lie on the Cytoplasmic side of the membrane. 2 consecutive transmembrane segments (helical) span residues 395–415 (RRAI…TIYT) and 416–436 (YASL…ILAY). The Cytoplasmic portion of the chain corresponds to 437–450 (RRSKVMKRPFRLKR). Residues 451–471 (LIFTIILSMLVLYVNHFIISE) traverse the membrane as a helical segment. The Extracellular portion of the chain corresponds to 472–490 (TLYALDIYHIEMDTSLLKY). The chain crosses the membrane as a helical span at residues 491–511 (YFWLTILVVVILVGIVAWLLG). At 512–840 (SRYTRPHQLE…LKVMRVIRHK (329 aa)) the chain is on the cytoplasmic side.

It belongs to the LPG synthase family.

It localises to the cell membrane. It carries out the reaction L-lysyl-tRNA(Lys) + a 1,2-diacyl-sn-glycero-3-phospho-(1'-sn-glycerol) = a 1,2-diacyl-sn-glycero-3-phospho-1'-(3'-O-L-lysyl)-sn-glycerol + tRNA(Lys). Its function is as follows. Catalyzes the transfer of a lysyl group from L-lysyl-tRNA(Lys) to membrane-bound phosphatidylglycerol (PG), which produces lysylphosphatidylglycerol (LPG), a major component of the bacterial membrane with a positive net charge. LPG synthesis contributes to bacterial virulence as it is involved in the resistance mechanism against cationic antimicrobial peptides (CAMP) produces by the host's immune system (defensins, cathelicidins) and by the competing microorganisms (bacteriocins). In fact, the modification of anionic phosphatidylglycerol with positively charged L-lysine results in repulsion of the peptides. This Staphylococcus haemolyticus (strain JCSC1435) protein is Phosphatidylglycerol lysyltransferase (mprF).